A 635-amino-acid chain; its full sequence is Threonine--tRNA ligase (635 aa).

Residues 1–144 (MQLLLIHSDY…RSIRPEGTQR (144 aa)) form an editing domain region. The segment at 215–514 (PHVELMRRLE…TEEGKVPMLP (300 aa)) is catalytic. Zn(2+) is bound by residues C307, H359, and H483.

Belongs to the class-II aminoacyl-tRNA synthetase family. In terms of assembly, homodimer. Zn(2+) is required as a cofactor.

It localises to the cytoplasm. The enzyme catalyses tRNA(Thr) + L-threonine + ATP = L-threonyl-tRNA(Thr) + AMP + diphosphate + H(+). Catalyzes the attachment of threonine to tRNA(Thr) in a two-step reaction: L-threonine is first activated by ATP to form Thr-AMP and then transferred to the acceptor end of tRNA(Thr). Also edits incorrectly charged L-seryl-tRNA(Thr). The chain is Threonine--tRNA ligase from Methanosarcina barkeri (strain Fusaro / DSM 804).